We begin with the raw amino-acid sequence, 311 residues long: Methionyl-tRNA formyltransferase (311 aa).

Position 108–111 (108–111) interacts with (6S)-5,6,7,8-tetrahydrofolate; the sequence is SILP.

The protein belongs to the Fmt family.

It carries out the reaction L-methionyl-tRNA(fMet) + (6R)-10-formyltetrahydrofolate = N-formyl-L-methionyl-tRNA(fMet) + (6S)-5,6,7,8-tetrahydrofolate + H(+). Attaches a formyl group to the free amino group of methionyl-tRNA(fMet). The formyl group appears to play a dual role in the initiator identity of N-formylmethionyl-tRNA by promoting its recognition by IF2 and preventing the misappropriation of this tRNA by the elongation apparatus. The sequence is that of Methionyl-tRNA formyltransferase from Sorangium cellulosum (strain So ce56) (Polyangium cellulosum (strain So ce56)).